The sequence spans 211 residues: Small ribosomal subunit protein uS5 (211 aa).

Positions 50-113 (LEDEVLDINM…DNAKINITRI (64 aa)) constitute an S5 DRBM domain.

Belongs to the universal ribosomal protein uS5 family. In terms of assembly, part of the 30S ribosomal subunit. Contacts protein S4.

With S4 and S12 plays an important role in translational accuracy. The chain is Small ribosomal subunit protein uS5 from Methanococcoides burtonii (strain DSM 6242 / NBRC 107633 / OCM 468 / ACE-M).